The chain runs to 729 residues: Fatty acid oxidation complex subunit alpha (729 aa).

An enoyl-CoA hydratase/isomerase region spans residues 1–189 (MLYKGDTLYL…KIGLVDGVVA (189 aa)). D296 is a binding site for substrate. Positions 311–729 (ETPKHAAVLG…ARPVGALKTA (419 aa)) are 3-hydroxyacyl-CoA dehydrogenase. NAD(+) contacts are provided by residues M324, D343, 400-402 (VVE), K407, and S429. H450 serves as the catalytic For 3-hydroxyacyl-CoA dehydrogenase activity. N453 is a binding site for NAD(+). Substrate is bound by residues N500 and Y660.

This sequence in the N-terminal section; belongs to the enoyl-CoA hydratase/isomerase family. It in the C-terminal section; belongs to the 3-hydroxyacyl-CoA dehydrogenase family. Heterotetramer of two alpha chains (FadB) and two beta chains (FadA).

The enzyme catalyses a (3S)-3-hydroxyacyl-CoA + NAD(+) = a 3-oxoacyl-CoA + NADH + H(+). It catalyses the reaction a (3S)-3-hydroxyacyl-CoA = a (2E)-enoyl-CoA + H2O. The catalysed reaction is a 4-saturated-(3S)-3-hydroxyacyl-CoA = a (3E)-enoyl-CoA + H2O. It carries out the reaction (3S)-3-hydroxybutanoyl-CoA = (3R)-3-hydroxybutanoyl-CoA. The enzyme catalyses a (3Z)-enoyl-CoA = a 4-saturated (2E)-enoyl-CoA. It catalyses the reaction a (3E)-enoyl-CoA = a 4-saturated (2E)-enoyl-CoA. It participates in lipid metabolism; fatty acid beta-oxidation. In terms of biological role, involved in the aerobic and anaerobic degradation of long-chain fatty acids via beta-oxidation cycle. Catalyzes the formation of 3-oxoacyl-CoA from enoyl-CoA via L-3-hydroxyacyl-CoA. It can also use D-3-hydroxyacyl-CoA and cis-3-enoyl-CoA as substrate. This is Fatty acid oxidation complex subunit alpha from Klebsiella pneumoniae (strain 342).